A 639-amino-acid chain; its full sequence is Protein P1 (639 aa).

The first 20 residues, 1–20 (MNRFTAYAALFFIFSLCSTA), serve as a signal peptide directing secretion. Helical transmembrane passes span 121 to 141 (AASVTLWAIISIWFGLYWTLA), 144 to 164 (ITLFLWTFSIEALCLILLGCI), and 172 to 192 (ALSLSEHLPVFLFMSPLKIIW). The Peptidase S39 domain occupies 207-399 (VEGYKGFSVP…GITSPNYVFE (193 aa)). Catalysis depends on for protease activity residues histidine 255, aspartate 286, and serine 354. Disordered stretches follow at residues 456–510 (TNAP…AAIS) and 542–639 (VSQK…NSKA). The span at 463 to 487 (TAQTNSAEKTAPSTSAEKTAPTNKP) shows a compositional bias: polar residues. Positions 551-561 (KQNKRGRRGGK) are enriched in basic residues. Polar residues predominate over residues 562–576 (NKQNNLPPTSTQSIS).

The protein belongs to the peptidase S39B family. Post-translationally, specific enzymatic cleavages in vivo yield mature proteins. The protease probably cleaves itself and releases the VPg protein. The VPg protein is probably further cleaved in its C-terminus.

It localises to the membrane. Its function is as follows. Precursor from which the VPg molecule is probably released at the onset of the RNA synthesis. Essential for virus replication. In Solanum tuberosum (Potato), this protein is Protein P1.